A 476-amino-acid polypeptide reads, in one-letter code: Glycogen synthase (476 aa).

Residue lysine 15 participates in ADP-alpha-D-glucose binding.

It belongs to the glycosyltransferase 1 family. Bacterial/plant glycogen synthase subfamily.

The enzyme catalyses [(1-&gt;4)-alpha-D-glucosyl](n) + ADP-alpha-D-glucose = [(1-&gt;4)-alpha-D-glucosyl](n+1) + ADP + H(+). Its pathway is glycan biosynthesis; glycogen biosynthesis. Its function is as follows. Synthesizes alpha-1,4-glucan chains using ADP-glucose. The chain is Glycogen synthase from Ligilactobacillus salivarius (strain UCC118) (Lactobacillus salivarius).